We begin with the raw amino-acid sequence, 72 residues long: Large ribosomal subunit protein bL31 (72 aa).

The Zn(2+) site is built by cysteine 16, cysteine 18, cysteine 37, and cysteine 40.

The protein belongs to the bacterial ribosomal protein bL31 family. Type A subfamily. As to quaternary structure, part of the 50S ribosomal subunit. Requires Zn(2+) as cofactor.

Binds the 23S rRNA. This chain is Large ribosomal subunit protein bL31, found in Hahella chejuensis (strain KCTC 2396).